A 168-amino-acid chain; its full sequence is Diphosphoinositol polyphosphate phosphohydrolase 1 (168 aa).

Position 1 is an N-acetylmethionine (Met-1). Residues Arg-10, 18-20 (KKR), and 39-41 (SSR) contribute to the substrate site. Positions 17–142 (YKKRAACLCF…KPVQASYFEA (126 aa)) constitute a Nudix hydrolase domain. Residues Gly-50 and Glu-66 each coordinate Mg(2+). A Nudix box motif is present at residues 51 to 72 (GGMEPEEEPSVAAVREVCEEAG). Glu-69 acts as the Proton acceptor in catalysis. Glu-70 lines the Mg(2+) pocket. Residues 89–91 (RKH), Arg-115, and Lys-133 each bind substrate.

Belongs to the Nudix hydrolase family. DIPP subfamily. In terms of assembly, monomer. It depends on Mg(2+) as a cofactor. Mn(2+) is required as a cofactor. The cofactor is Zn(2+).

Its subcellular location is the cytoplasm. It is found in the nucleus. The enzyme catalyses diphospho-myo-inositol polyphosphate + H2O = myo-inositol polyphosphate + phosphate.. It carries out the reaction 5-diphospho-1D-myo-inositol 1,2,3,4,6-pentakisphosphate + H2O = 1D-myo-inositol hexakisphosphate + phosphate + H(+). The catalysed reaction is 3,5-bis(diphospho)-1D-myo-inositol 1,2,4,6-tetrakisphosphate + H2O = 3-diphospho-1D-myo-inositol 1,2,4,5,6-pentakisphosphate + phosphate + 2 H(+). It catalyses the reaction [phosphate](n+1) + n H2O = (n+1) phosphate + n H(+). The enzyme catalyses P(1),P(5)-bis(5'-adenosyl) pentaphosphate + H2O = ADP + ATP + 2 H(+). It carries out the reaction P(1),P(6)-bis(5'-adenosyl) hexaphosphate + H2O = 2 ATP + 2 H(+). The catalysed reaction is P(1),P(4)-bis(5'-adenosyl) tetraphosphate + H2O = AMP + ATP + 2 H(+). It catalyses the reaction a 5'-end (N(7)-methyl 5'-triphosphoguanosine)-ribonucleoside in mRNA + H2O = N(7)-methyl-GMP + a 5'-end diphospho-ribonucleoside in mRNA + 2 H(+). The enzyme catalyses a 5'-end (N(7)-methyl 5'-triphosphoguanosine)-ribonucleoside in mRNA + H2O = N(7)-methyl-GDP + a 5'-end phospho-ribonucleoside in mRNA + 2 H(+). Diphosphoinositol polyphosphate phosphohydrolase is inhibited by fluoride and InsP6. In terms of biological role, cleaves a beta-phosphate from the diphosphate groups in PP-InsP5 (diphosphoinositol pentakisphosphate) and [PP]2-InsP4 (bisdiphosphoinositol tetrakisphosphate), suggesting that it may play a role in signal transduction. InsP6 (inositol hexakisphosphate) is not a substrate. Acts as a negative regulator of the ERK1/2 pathway. Also able to catalyze the hydrolysis of dinucleoside oligophosphates, with diadenosine 5',5'''-P1,P6-hexaphosphate (Ap6A) and diadenosine 5',5'''- P1,P5-pentaphosphate (Ap5A) being the preferred substrates. The major reaction products are ADP and p4a from Ap6A and ADP and ATP from Ap5A. Also able to hydrolyze 5- phosphoribose 1-diphosphate. Acts as a decapping enzyme that can hydrolyze both monomethylated and unmethylated capped RNAs. Hydrolyzes monomethylated capped RNA after both the alpha- and beta-phosphates generating m7GMP + ppRNA and m7GDP + pRNA. Modulates the stability of a subset of mRNAs implicated in cell motility. Divalent cations zinc, magnesium and manganese determine its substrate specificity. Exhibits endopolyphosphatase activity in the presence of zinc ions. Exhibits diphosphoinositol polyphosphate phosphohydrolase in the presence of magnesium ions and diadenosine hexaphosphate hydrolase activity in the presence of manganese ions. Plays an important role in limiting DNA damage and maintaining cell survival upon oxidative stress via its endopolyphosphatase activity. This chain is Diphosphoinositol polyphosphate phosphohydrolase 1, found in Rattus norvegicus (Rat).